The chain runs to 309 residues: uncharacterized protein (309 aa).

The protein to S.pombe SpAC14C4.04.

This is an uncharacterized protein from Schizosaccharomyces pombe (strain 972 / ATCC 24843) (Fission yeast).